Reading from the N-terminus, the 770-residue chain is Amyloid-beta precursor protein (770 aa).

An N-terminal signal peptide occupies residues 1–17 (MLPGLALVLLAAWTARA). The Extracellular portion of the chain corresponds to 18-701 (LEVPTDGNAG…AEDVGSNKGA (684 aa)). A GFLD subdomain region spans residues 28–123 (LLAEPQVAMF…PYRCLVGEFV (96 aa)). Residues 28 to 189 (LLAEPQVAMF…RGVEFVCCPL (162 aa)) form the E1 domain. Cystine bridges form between cysteine 38–cysteine 62, cysteine 73–cysteine 117, cysteine 98–cysteine 105, cysteine 133–cysteine 187, cysteine 144–cysteine 174, and cysteine 158–cysteine 186. 96–110 (NWCKRSRKQCKTHTH) lines the heparin pocket. Residues 131-189 (DKCKFLHQERMDVCETHLHWHTVAKETCSEKSTNLHDYGMLLPCGIDKFRGVEFVCCPL) form a cuBD subdomain region. Positions 135-155 (FLHQERMDVCETHLHWHTVAK) are copper-binding. Cu(2+) is bound by residues histidine 147, histidine 151, and tyrosine 168. The segment at 181–188 (GVEFVCCP) is zinc-binding. Residues glutamate 183, cysteine 186, and cysteine 187 each coordinate Zn(2+). Over residues 196–207 (IDSADAEEDDSD) the composition is skewed to acidic residues. Residues 196 to 284 (IDSADAEEDD…TTTTTTESVE (89 aa)) are disordered. Serine 198 is modified (phosphoserine; by CK2). Serine 206 carries the post-translational modification Phosphoserine; by CK1. 2 positions are modified to sulfotyrosine: tyrosine 217 and tyrosine 262. Over residues 228–264 (VAEEEEVADVEEEEAEDDEDDEDGDEVEEEAEEPYEE) the composition is skewed to acidic residues. Over residues 268–281 (RTTSIATTTTTTTE) the composition is skewed to low complexity. Cystine bridges form between cysteine 291/cysteine 341, cysteine 300/cysteine 324, and cysteine 316/cysteine 337. In terms of domain architecture, BPTI/Kunitz inhibitor spans 291–341 (CSEQAETGPCRAMISRWYFDVTEGKCAPFFYGGCGGNRNNFDTEEYCMAVC). The residue at position 336 (tyrosine 336) is a Sulfotyrosine. Positions 344-365 (VMSQSLLKTTQEHLPQDPVKLP) match the OX-2 motif. The region spanning 374–565 (AVDKYLETPG…EEIQDEVDEL (192 aa)) is the E2 domain. A heparin-binding region spans residues 391–423 (FQKAKERLEAKHRERMSQVMREWEEAERQAKNL). Serine 441 is subject to Phosphoserine. The heparin-binding stretch occupies residues 491-522 (FNMLKKYVRAEQKDRQHTLKHFEHVRMVDPKK). Position 497 is a phosphotyrosine (tyrosine 497). The segment at 523–540 (AAQIRSQVMTHLRVIYER) is collagen-binding. Residues asparagine 542 and asparagine 571 are each glycosylated (N-linked (GlcNAc...) asparagine). 4 residues coordinate Cu(2+): histidine 677, tyrosine 681, histidine 684, and histidine 685. Histidine 677, tyrosine 681, histidine 684, and histidine 685 together coordinate Zn(2+). An interaction with PSEN1 region spans residues 695-722 (VGSNKGAIIGLMVGGVVIATVIVITLVM). Residues 702–722 (IIGLMVGGVVIATVIVITLVM) traverse the membrane as a helical segment. Over 723–770 (LKKKQYTSIHHGVVEVDAAVTPEERHLSKMQQNGYENPTYKFFEQMQN) the chain is Cytoplasmic. The Basolateral sorting signal signature appears at 724–734 (KKKQYTSIHHG). Threonine 729 carries the post-translational modification Phosphothreonine. At serine 730 the chain carries Phosphoserine; by APP-kinase I. The interval 732 to 751 (HHGVVEVDAAVTPEERHLSK) is interaction with G(o)-alpha. Residue threonine 743 is modified to Phosphothreonine; by CDK5 and MAPK10. A required for the interaction with KIF5B and for anterograde transport in axons region spans residues 756-770 (GYENPTYKFFEQMQN). Position 757 is a phosphotyrosine; by ABL1 (tyrosine 757). The YENPXY motif; contains endocytosis signal motif lies at 757–762 (YENPTY). Residue lysine 763 forms a Glycyl lysine isopeptide (Lys-Gly) (interchain with G-Cter in ubiquitin) linkage.

It belongs to the APP family. Binds, via its C-terminus, to the PID domain of several cytoplasmic proteins, including APBB family members, the APBA family, MAPK8IP1, SHC1 and NUMB and DAB1. Binding to DAB1 inhibits its serine phosphorylation. Interacts (via NPXY motif) with DAB2 (via PID domain); the interaction is impaired by tyrosine phosphorylation of the NPXY motif. Also interacts with GPCR-like protein BPP, APPBP1, IB1, KNS2 (via its TPR domains), APPBP2 (via BaSS) and DDB1. In vitro, it binds MAPT via the MT-binding domains. Associates with microtubules in the presence of ATP and in a kinesin-dependent manner. Interacts, through a C-terminal domain, with GNAO1. Amyloid-beta protein 42 binds CHRNA7 in hippocampal neurons. Amyloid-beta associates with HADH2. Interacts with CPEB1, ANKS1B and AGER. Interacts with ITM2B. Interacts with ITM2C. Interacts with IDE. Can form homodimers; dimerization is enhanced in the presence of Cu(2+) ions. Can form homodimers; this is promoted by heparin binding. Amyloid-beta protein 40 interacts with S100A9. CTF-alpha product of APP interacts with GSAP. Interacts with SORL1 (via N-terminal ectodomain); this interaction retains APP in the trans-Golgi network and reduces processing into soluble APP-alpha and amyloid-beta peptides. The C99 fragment also interacts with SORL1. Interacts with PLD3. Interacts with VDAC1. Interacts with NSG1; could regulate APP processing. Amyloid-beta protein 42 interacts with FPR2. Interacts (via transmembrane region) with PSEN1; the interaction is direct. Interacts with LRRK2. Interacts (via cytoplasmic domain) with KIF5B. Interacts (via C-terminus) with APBB2/FE65L1 (via C-terminus). Interacts (via intracellular domain) with APBB3. Proteolytically processed under normal cellular conditions. Cleavage either by alpha-secretase, beta-secretase or theta-secretase leads to generation and extracellular release of soluble APP peptides, S-APP-alpha and S-APP-beta, and the retention of corresponding membrane-anchored C-terminal fragments, C80, C83 and C99. Subsequent processing of C80 and C83 by gamma-secretase yields P3 peptides. This is the major secretory pathway and is non-amyloidogenic. Alternatively, presenilin/nicastrin-mediated gamma-secretase processing of C99 releases the amyloid-beta proteins, amyloid-beta protein 40 and amyloid-beta protein 42, major components of amyloid plaques, and the cytotoxic C-terminal fragments, gamma-CTF(50), gamma-CTF(57) and gamma-CTF(59). PSEN1 cleavage is more efficient with C83 than with C99 as substrate (in vitro). Amyloid-beta protein 40 and Amyloid-beta protein 42 are cleaved by ACE. Many other minor amyloid-beta peptides, amyloid-beta 1-X peptides, are found in cerebral spinal fluid (CSF) including the amyloid-beta X-15 peptides, produced from the cleavage by alpha-secretase. In terms of processing, proteolytically cleaved by caspases during neuronal apoptosis. Cleavage at Asp-739 by either caspase-3, -8 or -9 results in the production of the neurotoxic C31 peptide and the increased production of amyloid-beta peptides. Post-translationally, N- and O-glycosylated. Phosphorylation in the C-terminal on tyrosine, threonine and serine residues is neuron-specific. Phosphorylation can affect APP processing, neuronal differentiation and interaction with other proteins. Phosphorylated on Thr-743 in neuronal cells by Cdc5 kinase and Mapk10, in dividing cells by Cdc2 kinase in a cell-cycle dependent manner with maximal levels at the G2/M phase and, in vitro, by GSK-3-beta. The Thr-743 phosphorylated form causes a conformational change which reduces binding of Fe65 family members. In dopaminergic (DA) neurons, phosphorylation on Thr-743 by LRKK2 promotes the production and the nuclear translocation of the APP intracellular domain (AICD) which induces DA neuron apoptosis. Phosphorylation on Tyr-757 is required for SHC binding. Phosphorylated in the extracellular domain by casein kinases on both soluble and membrane-bound APP. This phosphorylation is inhibited by heparin. In terms of processing, extracellular binding and reduction of copper, results in a corresponding oxidation of Cys-144 and Cys-158, and the formation of a disulfide bond. Post-translationally, trophic-factor deprivation triggers the cleavage of surface APP by beta-secretase to release sAPP-beta which is further cleaved to release an N-terminal fragment of APP (N-APP). Amyloid-beta peptides are degraded by IDE. In terms of processing, sulfated on tyrosine residues.

The protein localises to the cell membrane. Its subcellular location is the membrane. It is found in the perikaryon. It localises to the cell projection. The protein resides in the growth cone. The protein localises to the clathrin-coated pit. Its subcellular location is the early endosome. It is found in the cytoplasmic vesicle. It localises to the endoplasmic reticulum. The protein resides in the golgi apparatus. The protein localises to the secreted. Its subcellular location is the cell surface. It is found in the nucleus. It localises to the cytoplasm. Functions as a cell surface receptor and performs physiological functions on the surface of neurons relevant to neurite growth, neuronal adhesion and axonogenesis. Interaction between APP molecules on neighboring cells promotes synaptogenesis. Involved in cell mobility and transcription regulation through protein-protein interactions. Can promote transcription activation through binding to APBB1-KAT5 and inhibit Notch signaling through interaction with Numb. Couples to apoptosis-inducing pathways such as those mediated by G(o) and JIP. Inhibits G(o)-alpha ATPase activity. Acts as a kinesin I membrane receptor, mediating the axonal transport of beta-secretase and presenilin 1. By acting as a kinesin I membrane receptor, plays a role in axonal anterograde transport of cargo towards synapses in axons. May be involved in copper homeostasis/oxidative stress through copper ion reduction. In vitro, copper-metallated APP induces neuronal death directly or is potentiated through Cu(2+)-mediated low-density lipoprotein oxidation. Can regulate neurite outgrowth through binding to components of the extracellular matrix such as heparin and collagen I and IV. Induces a AGER-dependent pathway that involves activation of p38 MAPK, resulting in internalization of amyloid-beta peptide and mitochondrial dysfunction in cultured cortical neurons. Provides Cu(2+) ions for GPC1 which are required for release of nitric oxide (NO) and subsequent degradation of the heparan sulfate chains on GPC1. Functionally, amyloid-beta peptides are lipophilic metal chelators with metal-reducing activity. Binds transient metals such as copper, zinc and iron. Its function is as follows. The gamma-CTF peptides as well as the caspase-cleaved peptides, including C31, are potent enhancers of neuronal apoptosis. The protein is Amyloid-beta precursor protein of Sus scrofa (Pig).